An 80-amino-acid chain; its full sequence is Cell division protein ZapB (80 aa).

Positions 3–80 (LEILEQLEAK…GLLGKMEEVE (78 aa)) form a coiled coil. The interval 41–62 (LEQANNGRSEVEQEAQKARDEQ) is disordered. A compositionally biased stretch (basic and acidic residues) spans 49 to 62 (SEVEQEAQKARDEQ).

It belongs to the ZapB family. As to quaternary structure, homodimer. The ends of the coiled-coil dimer bind to each other, forming polymers. Interacts with FtsZ.

It is found in the cytoplasm. In terms of biological role, non-essential, abundant cell division factor that is required for proper Z-ring formation. It is recruited early to the divisome by direct interaction with FtsZ, stimulating Z-ring assembly and thereby promoting cell division earlier in the cell cycle. Its recruitment to the Z-ring requires functional FtsA or ZipA. The sequence is that of Cell division protein ZapB from Aliivibrio salmonicida (strain LFI1238) (Vibrio salmonicida (strain LFI1238)).